Here is a 208-residue protein sequence, read N- to C-terminus: Ras-related protein M-Ras (208 aa).

GTP contacts are provided by Asp-21, Gly-22, Gly-23, Val-24, Gly-25, Lys-26, Ser-27, Ala-28, Phe-38, Val-39, Pro-40, Tyr-42, Pro-44, and Thr-45. Ser-27 serves as a coordination point for Mg(2+). Residues 42–50 (YDPTIEDSY) carry the Effector region motif. 2 residues coordinate Mg(2+): Thr-45 and Asp-67. Residues Gly-70, Asn-126, Lys-127, Asp-129, Ser-156, Ala-157, and Lys-158 each contribute to the GTP site. Cys-205 bears the Cysteine methyl ester mark. Cys-205 is lipidated: S-geranylgeranyl cysteine. Positions 206–208 (VIL) are cleaved as a propeptide — removed in mature form.

It belongs to the small GTPase superfamily. Ras family. In terms of assembly, component of the SHOC2-MRAS-PP1c (SMP) holophosphatase complex consisting of SHOC2, GTP-bound M-Ras/MRAS and the catalytic subunit of protein phosphatase 1 (either PPP1CA, PPP1CB or PPP1CC). Interacts (active GTP-bound form) with both SHOC2 and PP1c (all isoforms) to form a tertiary complex; SHOC2 and PP1c preferably bind M-Ras/MRAS, but they also bind K-Ras/KRAS, N-Ras/NRAS and H-Ras/HRAS. Interacts with RGL3. Interacts (active GTP-bound form preferentially) with RGS14. Requires Mg(2+) as cofactor. In terms of tissue distribution, expression highly restricted to the brain and heart.

It localises to the cell membrane. It catalyses the reaction GTP + H2O = GDP + phosphate + H(+). In terms of biological role, signal transducer in the Ras-MAPK signaling pathway that regulates cell proliferation and survival. Core component of the SHOC2-MRAS-PP1c (SMP) holophosphatase complex that regulates the MAPK pathway activation. The formation of the SMP complex only occurs when MRAS is GTP-bound. MRAS has low intrinsic GTPase activity and may require additional factors for activation. The SMP complex specifically dephosphorylates the inhibitory phosphorylation at 'Ser-259' of RAF1 kinase, 'Ser-365' of BRAF kinase and 'Ser-214' of ARAF kinase, stimulating their kinase activities. In Homo sapiens (Human), this protein is Ras-related protein M-Ras (MRAS).